We begin with the raw amino-acid sequence, 484 residues long: Glutamate--tRNA ligase (484 aa).

The 'HIGH' region signature appears at 11–21 (PSPTGYLHIGN). The 'KMSKS' region motif lies at 252–256 (KLSKR). Residue K255 coordinates ATP.

The protein belongs to the class-I aminoacyl-tRNA synthetase family. Glutamate--tRNA ligase type 1 subfamily. As to quaternary structure, monomer.

The protein localises to the cytoplasm. It catalyses the reaction tRNA(Glu) + L-glutamate + ATP = L-glutamyl-tRNA(Glu) + AMP + diphosphate. Catalyzes the attachment of glutamate to tRNA(Glu) in a two-step reaction: glutamate is first activated by ATP to form Glu-AMP and then transferred to the acceptor end of tRNA(Glu). In Staphylococcus aureus (strain Newman), this protein is Glutamate--tRNA ligase.